A 180-amino-acid chain; its full sequence is NAD(P)H-quinone oxidoreductase subunit I, chloroplastic (180 aa).

4Fe-4S ferredoxin-type domains are found at residues 55–84 (GRIH…VDWK) and 95–124 (LNYS…MTEE). 8 residues coordinate [4Fe-4S] cluster: Cys-64, Cys-67, Cys-70, Cys-74, Cys-104, Cys-107, Cys-110, and Cys-114.

This sequence belongs to the complex I 23 kDa subunit family. NDH is composed of at least 16 different subunits, 5 of which are encoded in the nucleus. [4Fe-4S] cluster is required as a cofactor.

It is found in the plastid. The protein localises to the chloroplast thylakoid membrane. It catalyses the reaction a plastoquinone + NADH + (n+1) H(+)(in) = a plastoquinol + NAD(+) + n H(+)(out). The catalysed reaction is a plastoquinone + NADPH + (n+1) H(+)(in) = a plastoquinol + NADP(+) + n H(+)(out). NDH shuttles electrons from NAD(P)H:plastoquinone, via FMN and iron-sulfur (Fe-S) centers, to quinones in the photosynthetic chain and possibly in a chloroplast respiratory chain. The immediate electron acceptor for the enzyme in this species is believed to be plastoquinone. Couples the redox reaction to proton translocation, and thus conserves the redox energy in a proton gradient. This Sorghum bicolor (Sorghum) protein is NAD(P)H-quinone oxidoreductase subunit I, chloroplastic.